A 122-amino-acid polypeptide reads, in one-letter code: Small ribosomal subunit protein uS13 (122 aa).

The disordered stretch occupies residues 97 to 122 (PVRGQRTHTNARTRKGPAKAIAGKKK).

Belongs to the universal ribosomal protein uS13 family. In terms of assembly, part of the 30S ribosomal subunit. Forms a loose heterodimer with protein S19. Forms two bridges to the 50S subunit in the 70S ribosome.

Functionally, located at the top of the head of the 30S subunit, it contacts several helices of the 16S rRNA. In the 70S ribosome it contacts the 23S rRNA (bridge B1a) and protein L5 of the 50S subunit (bridge B1b), connecting the 2 subunits; these bridges are implicated in subunit movement. Contacts the tRNAs in the A and P-sites. This is Small ribosomal subunit protein uS13 from Bartonella quintana (strain Toulouse) (Rochalimaea quintana).